The chain runs to 158 residues: Transcription elongation factor GreA (158 aa).

Residues 1–26 (MNKVPLTEKGAQQLREELQELKTVVR) are a coiled coil.

It belongs to the GreA/GreB family.

Its function is as follows. Necessary for efficient RNA polymerase transcription elongation past template-encoded arresting sites. The arresting sites in DNA have the property of trapping a certain fraction of elongating RNA polymerases that pass through, resulting in locked ternary complexes. Cleavage of the nascent transcript by cleavage factors such as GreA or GreB allows the resumption of elongation from the new 3'terminus. GreA releases sequences of 2 to 3 nucleotides. The sequence is that of Transcription elongation factor GreA from Nitrosococcus oceani (strain ATCC 19707 / BCRC 17464 / JCM 30415 / NCIMB 11848 / C-107).